A 274-amino-acid chain; its full sequence is Diaminopimelate epimerase (274 aa).

Substrate-binding residues include N11, Q44, and N64. C73 (proton donor) is an active-site residue. Substrate is bound by residues 74–75 (GN), N157, N190, and 208–209 (ER). The Proton acceptor role is filled by C217. 218 to 219 (GS) contributes to the substrate binding site.

Belongs to the diaminopimelate epimerase family. Homodimer.

Its subcellular location is the cytoplasm. It carries out the reaction (2S,6S)-2,6-diaminopimelate = meso-2,6-diaminopimelate. The protein operates within amino-acid biosynthesis; L-lysine biosynthesis via DAP pathway; DL-2,6-diaminopimelate from LL-2,6-diaminopimelate: step 1/1. Its function is as follows. Catalyzes the stereoinversion of LL-2,6-diaminopimelate (L,L-DAP) to meso-diaminopimelate (meso-DAP), a precursor of L-lysine and an essential component of the bacterial peptidoglycan. The sequence is that of Diaminopimelate epimerase from Photorhabdus laumondii subsp. laumondii (strain DSM 15139 / CIP 105565 / TT01) (Photorhabdus luminescens subsp. laumondii).